Consider the following 132-residue polypeptide: Large ribosomal subunit protein uL24 (132 aa).

It belongs to the universal ribosomal protein uL24 family. As to quaternary structure, part of the 50S ribosomal subunit.

In terms of biological role, one of two assembly initiator proteins, it binds directly to the 5'-end of the 23S rRNA, where it nucleates assembly of the 50S subunit. Functionally, one of the proteins that surrounds the polypeptide exit tunnel on the outside of the subunit. The chain is Large ribosomal subunit protein uL24 from Synechococcus sp. (strain JA-3-3Ab) (Cyanobacteria bacterium Yellowstone A-Prime).